The chain runs to 290 residues: Tubulin polyglutamylase complex subunit 1 (290 aa).

The tract at residues 1–30 (MAAVEKRRQAVPPPAGFTDSGRQSVSRAAG) is disordered. A phosphoserine mark is found at Ser-34 and Ser-266.

In terms of assembly, part of the neuronal tubulin polyglutamylase complex which contains TPGS1, TPGS2, TTLL1, LRRC49 and NICN1. Interacts with PCM1, CSTPP1 and LRRC49.

The protein resides in the cytoplasm. It localises to the cytoskeleton. The protein localises to the cilium axoneme. It is found in the flagellum axoneme. Its subcellular location is the cilium basal body. The protein resides in the flagellum basal body. It localises to the cell projection. The protein localises to the axon. It is found in the dendrite. Its subcellular location is the microtubule organizing center. The protein resides in the centrosome. It localises to the centriolar satellite. In terms of biological role, subunit of the tubulin polyglutamylase complex (TPGC). The complex mediates cilia and flagella polyglutamylation which is essential for their biogenesis and motility. May act in the targeting of the tubulin polyglutamylase complex. Required for the development of the spermatid flagellum. This Homo sapiens (Human) protein is Tubulin polyglutamylase complex subunit 1.